The primary structure comprises 343 residues: Heat-inducible transcription repressor HrcA (343 aa).

This sequence belongs to the HrcA family.

Its function is as follows. Negative regulator of class I heat shock genes (grpE-dnaK-dnaJ and groELS operons). Prevents heat-shock induction of these operons. This is Heat-inducible transcription repressor HrcA from Bacillus licheniformis (strain ATCC 14580 / DSM 13 / JCM 2505 / CCUG 7422 / NBRC 12200 / NCIMB 9375 / NCTC 10341 / NRRL NRS-1264 / Gibson 46).